A 269-amino-acid chain; its full sequence is Adenosylcobinamide-GDP ribazoletransferase (269 aa).

The next 6 helical transmembrane spans lie at 63–83 (SAYY…LLYL), 87–107 (LPPG…TGML), 137–157 (VGAF…SLLG), 158–178 (AGLP…VVLM), 202–222 (LAFL…AALV), and 246–266 (VYGL…GWGF).

This sequence belongs to the CobS family. The cofactor is Mg(2+).

It localises to the cell membrane. It catalyses the reaction alpha-ribazole + adenosylcob(III)inamide-GDP = adenosylcob(III)alamin + GMP + H(+). It carries out the reaction alpha-ribazole 5'-phosphate + adenosylcob(III)inamide-GDP = adenosylcob(III)alamin 5'-phosphate + GMP + H(+). It participates in cofactor biosynthesis; adenosylcobalamin biosynthesis; adenosylcobalamin from cob(II)yrinate a,c-diamide: step 7/7. Joins adenosylcobinamide-GDP and alpha-ribazole to generate adenosylcobalamin (Ado-cobalamin). Also synthesizes adenosylcobalamin 5'-phosphate from adenosylcobinamide-GDP and alpha-ribazole 5'-phosphate. In Deinococcus radiodurans (strain ATCC 13939 / DSM 20539 / JCM 16871 / CCUG 27074 / LMG 4051 / NBRC 15346 / NCIMB 9279 / VKM B-1422 / R1), this protein is Adenosylcobinamide-GDP ribazoletransferase.